The sequence spans 397 residues: MKILVLNCGSSSIKYKLFDMKAKSILAQGGVEKIGLTGSFLKLTLPNGKKVILEGEILEHRTGVEYILGVITSEKYGCIRSLSEIDAVGHRVVHGGEKFNSSVLIDDEVIRKITECIDLAPLHNPPNLNGIYAVVELMPSTPQVGVFDTAFHQTMPDFAYMYGLPYSLYEKYAIRRYGFHGTSHRYVSKRACEMLYMSYERQRIISCHIGNGASVTAIKNGISVDTSMGMTPVEGLLMGTRCGDIDAGILTYIMEKENIGTSAISTIINKCSGVLGTSGISSDMREIDDAIEIGNKKAILTSDIYTYKIKKYIGAYTVALEGIDILVFTGGVGENQFRIRQKICDGLEFIGIKIDEATNHIRGKETIISTTDSKVKVVVVPTDEEFMIALDTLSLLS.

Asn7 serves as a coordination point for Mg(2+). Lys14 serves as a coordination point for ATP. Residue Arg91 coordinates substrate. Asp148 serves as the catalytic Proton donor/acceptor. ATP is bound by residues 208 to 212, 283 to 285, and 331 to 335; these read HIGNG, DMR, and GVGEN. Glu384 contributes to the Mg(2+) binding site.

The protein belongs to the acetokinase family. Homodimer. Mg(2+) is required as a cofactor. It depends on Mn(2+) as a cofactor.

The protein localises to the cytoplasm. The catalysed reaction is acetate + ATP = acetyl phosphate + ADP. It participates in metabolic intermediate biosynthesis; acetyl-CoA biosynthesis; acetyl-CoA from acetate: step 1/2. Its function is as follows. Catalyzes the formation of acetyl phosphate from acetate and ATP. Can also catalyze the reverse reaction. The protein is Acetate kinase of Azobacteroides pseudotrichonymphae genomovar. CFP2.